Consider the following 2785-residue polypeptide: Testis-expressed protein 15 (2785 aa).

Residues 262–274 show a composition bias toward low complexity; it reads SSSFPSSLSNAFS. Disordered stretches follow at residues 262–331, 596–620, 661–683, 904–924, 943–1064, 2276–2458, 2470–2511, and 2571–2601; these read SSSF…PSSD, EQRDDKNPNEAKEHNTDNINGSEKQ, NGKPAETASSESEAVEQRHAPND, TESTEPETNKEGNASGFGMCS, VQES…QGRI, NRQE…TNDK, DIDA…LVPD, and TQPIKSESPKKSMTDAPNPNTAPFGSYGNSA. Residues 275-286 are compositionally biased toward basic and acidic residues; that stretch reads DVRKQKHSEEQV. The span at 314-331 shows a compositional bias: polar residues; sequence TCSNDSQGHFSQESPSSD. Basic and acidic residues predominate over residues 596–611; that stretch reads EQRDDKNPNEAKEHNT. 2 stretches are compositionally biased toward polar residues: residues 962 to 989 and 1021 to 1031; these read HNTHVDQGSGKPNNDSLSTEPSNVTVMN and HASSSRGQNIA. Positions 1033–1042 are enriched in basic and acidic residues; it reads KDLREHETHE. Composition is skewed to polar residues over residues 1049–1064, 2291–2314, 2327–2338, 2353–2387, 2394–2415, 2431–2454, 2491–2502, and 2585–2601; these read SHGSSDRFSSLSQGRI, DSSQPGVSEQTPPGTECTVKNISD, EVSQGKGNTDTV, NIQTVSKHPSTTGSPPNDENKIGSNSSDSLKSISA, RQSSVLGSVSPAESVQDTCTPK, ASLTEQQENSNVIEKRNGNSSVAE, DHTQISPSNLTA, and DAPNPNTAPFGSYGNSA.

It belongs to the TEX15 family. Interacts with PIWIL4. Interacts with PIWIL2. In terms of tissue distribution, detected in testis and ovary, and at lower levels in lung and brain.

Its subcellular location is the cytoplasm. The protein resides in the nucleus. In terms of biological role, required during spermatogenesis for normal chromosome synapsis and meiotic recombination in germ cells. Necessary for formation of DMC1 and RAD51 foci on meiotic chromosomes, suggesting a specific role in DNA double-stranded break repair. Essential executor of PIWIL4-piRNA pathway directed transposon DNA methylation and silencing in the male embryonic germ cells. PIWIL4-piRNA binds to nascent transposon transcripts and interacts with TEX15, which may in turn recruit the epigenetic silencing machinery to the transposon loci. Not required for piRNA biosynthesis. The chain is Testis-expressed protein 15 from Mus musculus (Mouse).